The chain runs to 520 residues: MAMVSSCRLCLRTDSLYLAIEQSAAQANSLPRSSCSVVPRRTQIICPQLQVLPNALKSLQPGHGLKRLKEGNVFAVRASTTTDTDVNVDADAVAPGKFIPASPIVLSKGPWEQIPGGVTAAKGFRAAGMYAQLRAAGKKPDLALIVCDTDAVSAGTFTKNVVAAAPVIYCKKTLADSSTARAILINAGQANAATGDAGYQDTLECVAAVAKHCGVPEGAVLIESTGVIGRRIKKDALIEAVPKLVGSLSASVASADAAAVAITTTDLVSKSVAIETKIGGTTVRLGGIAKGSGMIHPNMATMLGVVTCDVDVTAEVWRPMVITAVNRSFNQITVDGDSSTNDTLLALASGAAGGPKISDINSEEARQLQAALDAVLQGLAKSIASDGEGATCLVEVTVTGASDEAAAATVARSVAASSLTKAAIYGRDPNWGRIACATGYAGVPFDPLCLQIYLGDFHLMEKGQPLEFDSNGASAYLKKAGEVHGTVSINICIGHGPGQSQAWGCDLSYDYVKINAEYTT.

Substrate contacts are provided by Thr264, Lys290, Thr301, Glu388, Asn515, and Thr520. Catalysis depends on Thr301, which acts as the Nucleophile.

It belongs to the ArgJ family. Heterodimer of an alpha and a beta chain.

The protein resides in the plastid. Its subcellular location is the chloroplast. It carries out the reaction N(2)-acetyl-L-ornithine + L-glutamate = N-acetyl-L-glutamate + L-ornithine. It catalyses the reaction L-glutamate + acetyl-CoA = N-acetyl-L-glutamate + CoA + H(+). It functions in the pathway amino-acid biosynthesis; L-arginine biosynthesis; L-ornithine and N-acetyl-L-glutamate from L-glutamate and N(2)-acetyl-L-ornithine (cyclic): step 1/1. Its pathway is amino-acid biosynthesis; L-arginine biosynthesis; N(2)-acetyl-L-ornithine from L-glutamate: step 1/4. Functionally, catalyzes two activities which are involved in the cyclic version of arginine biosynthesis: the synthesis of acetylglutamate from glutamate and acetyl-CoA, and of ornithine by transacetylation between acetylornithine and glutamate. This Physcomitrium patens (Spreading-leaved earth moss) protein is Arginine biosynthesis bifunctional protein ArgJ, chloroplastic.